Reading from the N-terminus, the 481-residue chain is Glucokinase-1 (481 aa).

In terms of domain architecture, Hexokinase spans 4–477; that stretch reads PKLTKAVDSI…SGVGAALCAL (474 aa). The interval 64–204 is hexokinase small subdomain; that stretch reads SGQEHGVTML…LSNVHVVALT (141 aa). An ATP-binding site is contributed by lysine 101. The segment at 146 to 172 is glucose-binding; that stretch reads KMGFTFSYPVDQTSLSSGKLIRWTKGF. A hexokinase large subdomain region spans residues 205–466; it reads NDTTGTLLAR…RDVHLRISKD (262 aa). Residue 466-471 participates in ATP binding; that stretch reads DGSGVG.

Belongs to the hexokinase family.

The catalysed reaction is D-glucose + ATP = D-glucose 6-phosphate + ADP + H(+). The enzyme catalyses a D-hexose + ATP = a D-hexose 6-phosphate + ADP + H(+). It catalyses the reaction D-mannose + ATP = D-mannose 6-phosphate + ADP + H(+). Its pathway is carbohydrate metabolism; hexose metabolism. It participates in carbohydrate degradation; glycolysis; D-glyceraldehyde 3-phosphate and glycerone phosphate from D-glucose: step 1/4. Glukokinase specific for aldohexoses. Phosphorylates glucose and mannose, but not fructose. The chain is Glucokinase-1 (GLK1) from Kluyveromyces lactis (strain ATCC 8585 / CBS 2359 / DSM 70799 / NBRC 1267 / NRRL Y-1140 / WM37) (Yeast).